A 467-amino-acid polypeptide reads, in one-letter code: DEAD-box ATP-dependent RNA helicase CshA (467 aa).

A Q motif motif is present at residues Thr2–Ala30. Residues Ile33–Val203 enclose the Helicase ATP-binding domain. Ala46–Thr53 contributes to the ATP binding site. The DEAD box signature appears at Asp151–Asp154. One can recognise a Helicase C-terminal domain in the interval Asn214–Ala374. A disordered region spans residues Thr428–His467. The segment covering Ser457 to His467 has biased composition (basic residues).

Belongs to the DEAD box helicase family. CshA subfamily. In terms of assembly, oligomerizes, may be a member of the RNA degradosome.

It localises to the cytoplasm. It carries out the reaction ATP + H2O = ADP + phosphate + H(+). Its function is as follows. DEAD-box RNA helicase possibly involved in RNA degradation. Unwinds dsRNA in both 5'- and 3'-directions, has RNA-dependent ATPase activity. The protein is DEAD-box ATP-dependent RNA helicase CshA of Geobacillus kaustophilus (strain HTA426).